We begin with the raw amino-acid sequence, 448 residues long: Tubulin beta chain (448 aa).

Residues Gln11, Glu69, Ser138, Gly142, Thr143, Gly144, Asn204, and Asn226 each contribute to the GTP site. Glu69 serves as a coordination point for Mg(2+). The segment at 426 to 448 (QDAGIDEEEEEYEEEAPVDEPLE) is disordered. The span at 429 to 448 (GIDEEEEEYEEEAPVDEPLE) shows a compositional bias: acidic residues.

The protein belongs to the tubulin family. Dimer of alpha and beta chains. A typical microtubule is a hollow water-filled tube with an outer diameter of 25 nm and an inner diameter of 15 nM. Alpha-beta heterodimers associate head-to-tail to form protofilaments running lengthwise along the microtubule wall with the beta-tubulin subunit facing the microtubule plus end conferring a structural polarity. Microtubules usually have 13 protofilaments but different protofilament numbers can be found in some organisms and specialized cells. Mg(2+) is required as a cofactor.

The protein resides in the cytoplasm. It is found in the cytoskeleton. Functionally, tubulin is the major constituent of microtubules, a cylinder consisting of laterally associated linear protofilaments composed of alpha- and beta-tubulin heterodimers. Microtubules grow by the addition of GTP-tubulin dimers to the microtubule end, where a stabilizing cap forms. Below the cap, tubulin dimers are in GDP-bound state, owing to GTPase activity of alpha-tubulin. The sequence is that of Tubulin beta chain (TUB2) from Epichloe coenophiala (Tall fescue endophyte fungus).